Here is a 395-residue protein sequence, read N- to C-terminus: uncharacterized protein (395 aa).

12 helical membrane passes run leucine 12–leucine 34, leucine 44–leucine 66, tyrosine 75–asparagine 94, valine 99–phenylalanine 121, phenylalanine 134–valine 156, isoleucine 160–valine 182, leucine 208–serine 230, valine 245–valine 264, alanine 271–phenylalanine 293, leucine 298–tyrosine 320, leucine 341–leucine 360, and serine 364–leucine 381.

It belongs to the major facilitator superfamily.

The protein resides in the cell inner membrane. In terms of biological role, a transporter able to export peptides. When overexpressed, allows cells deleted for multiple peptidases (pepA, pepB, pepD and pepN) to grow in the presence of dipeptides Ala-Gln or Gly-Tyr which otherwise inhibit growth. Cells overexpressing this protein have decreased intracellular levels of Ala-Gln dipeptide, and in a system that produces the Ala-Gln dipeptide overproduction of this protein increases export of the dipeptide. This is an uncharacterized protein from Escherichia coli (strain K12).